The chain runs to 62 residues: Large ribosomal subunit protein eL37 (62 aa).

Residues Cys-20, Cys-23, Cys-35, and Cys-38 each coordinate Zn(2+). Residues 20 to 38 (CRRCGRRSYNVAKGYCAAC) form a C4-type zinc finger.

It belongs to the eukaryotic ribosomal protein eL37 family. It depends on Zn(2+) as a cofactor.

Functionally, binds to the 23S rRNA. This chain is Large ribosomal subunit protein eL37 (rpl37e), found in Aeropyrum pernix (strain ATCC 700893 / DSM 11879 / JCM 9820 / NBRC 100138 / K1).